Here is a 662-residue protein sequence, read N- to C-terminus: Fructose-1,6-bisphosphatase class 3 (662 aa).

It belongs to the FBPase class 3 family. Mn(2+) is required as a cofactor.

It catalyses the reaction beta-D-fructose 1,6-bisphosphate + H2O = beta-D-fructose 6-phosphate + phosphate. It participates in carbohydrate biosynthesis; gluconeogenesis. This is Fructose-1,6-bisphosphatase class 3 from Clostridium tetani (strain Massachusetts / E88).